We begin with the raw amino-acid sequence, 747 residues long: Histone-lysine N-methyltransferase EZH1 (747 aa).

The interval 186-229 (YSDEDEEGHNDTSDGKQDDSKEDLPVTRKRKRHAIEGSKKSSKK) is disordered. The span at 194 to 211 (HNDTSDGKQDDSKEDLPV) shows a compositional bias: basic and acidic residues. A Glycyl lysine isopeptide (Lys-Gly) (interchain with G-Cter in SUMO2) cross-link involves residue Lys327. The tract at residues 375–421 (TSASAVAETKEGDSDRDTGNDWASSSSEANSRCQTPTKQKASPAPPQ) is disordered. Residues 382–393 (ETKEGDSDRDTG) show a composition bias toward basic and acidic residues. Residues 395–414 (DWASSSSEANSRCQTPTKQK) are compositionally biased toward polar residues. Residues 504-606 (CRKIQLKKDN…CKVVSCKNCS (103 aa)) enclose the CXC domain. The SET domain maps to 613-728 (KHLLLAPSDV…AGEELFFDYR (116 aa)).

This sequence belongs to the class V-like SAM-binding methyltransferase superfamily. Histone-lysine methyltransferase family. EZ subfamily. Component of the PRC2/EED-EZH1 complex, which includes EED, EZH1, SUZ12, RBBP4 and AEBP2. The PRC2/EED-EZH1 is less abundant than the PRC2/EED-EZH2 complex, has weak methyltransferase activity and compacts chromatin in the absence of the methyltransferase cofactor S-adenosyl-L-methionine (SAM). Interacts with EZHIP; the interaction blocks EZH1 methyltransferase activity.

The protein resides in the nucleus. It carries out the reaction L-lysyl(27)-[histone H3] + 3 S-adenosyl-L-methionine = N(6),N(6),N(6)-trimethyl-L-lysyl(27)-[histone H3] + 3 S-adenosyl-L-homocysteine + 3 H(+). Functionally, polycomb group (PcG) protein. Catalytic subunit of the PRC2/EED-EZH1 complex, which methylates 'Lys-27' of histone H3, leading to transcriptional repression of the affected target gene. Able to mono-, di- and trimethylate 'Lys-27' of histone H3 to form H3K27me1, H3K27me2 and H3K27me3, respectively. Required for embryonic stem cell derivation and self-renewal, suggesting that it is involved in safeguarding embryonic stem cell identity. Compared to EZH2-containing complexes, it is less abundant in embryonic stem cells, has weak methyltransferase activity and plays a less critical role in forming H3K27me3, which is required for embryonic stem cell identity and proper differentiation. The sequence is that of Histone-lysine N-methyltransferase EZH1 (EZH1) from Bos taurus (Bovine).